Reading from the N-terminus, the 688-residue chain is Glycine--tRNA ligase beta subunit (688 aa).

The protein belongs to the class-II aminoacyl-tRNA synthetase family. As to quaternary structure, tetramer of two alpha and two beta subunits.

The protein resides in the cytoplasm. The enzyme catalyses tRNA(Gly) + glycine + ATP = glycyl-tRNA(Gly) + AMP + diphosphate. This chain is Glycine--tRNA ligase beta subunit, found in Haemophilus influenzae (strain PittEE).